The primary structure comprises 434 residues: Tol-Pal system protein TolB (434 aa).

The N-terminal stretch at 1-28 (MQQTCKRKIWMQISVALVTSLWMISAQA) is a signal peptide.

It belongs to the TolB family. As to quaternary structure, the Tol-Pal system is composed of five core proteins: the inner membrane proteins TolA, TolQ and TolR, the periplasmic protein TolB and the outer membrane protein Pal. They form a network linking the inner and outer membranes and the peptidoglycan layer.

Its subcellular location is the periplasm. Functionally, part of the Tol-Pal system, which plays a role in outer membrane invagination during cell division and is important for maintaining outer membrane integrity. The sequence is that of Tol-Pal system protein TolB from Alcanivorax borkumensis (strain ATCC 700651 / DSM 11573 / NCIMB 13689 / SK2).